We begin with the raw amino-acid sequence, 60 residues long: UPF0181 protein PMI1604 (60 aa).

Belongs to the UPF0181 family.

The sequence is that of UPF0181 protein PMI1604 from Proteus mirabilis (strain HI4320).